The sequence spans 346 residues: Protein FAF1 (346 aa).

Disordered regions lie at residues Q22–G120 and K323–R346. Residues F31–T65 are compositionally biased toward basic and acidic residues. Residues S72–N85 are compositionally biased toward acidic residues.

In terms of assembly, interacts with KRR1.

It localises to the nucleus. Its subcellular location is the nucleolus. In terms of biological role, required for pre-rRNA processing and 40S ribosomal subunit assembly. Seems to act in the processing of 35S rRNA at the A(0), A(1), and A(2) cleavage sites. This chain is Protein FAF1 (FAF1), found in Saccharomyces cerevisiae (strain ATCC 204508 / S288c) (Baker's yeast).